The primary structure comprises 283 residues: Elongation factor Ts (283 aa).

The segment at 80–83 (TDFV) is involved in Mg(2+) ion dislocation from EF-Tu.

Belongs to the EF-Ts family.

Its subcellular location is the cytoplasm. Its function is as follows. Associates with the EF-Tu.GDP complex and induces the exchange of GDP to GTP. It remains bound to the aminoacyl-tRNA.EF-Tu.GTP complex up to the GTP hydrolysis stage on the ribosome. This is Elongation factor Ts from Cronobacter sakazakii (strain ATCC BAA-894) (Enterobacter sakazakii).